Here is a 286-residue protein sequence, read N- to C-terminus: tRNA (guanine-N(1)-)-methyltransferase (286 aa).

S-adenosyl-L-methionine is bound by residues glycine 116 and 140 to 145 (IGDYVL). Residues 232-286 (DALPPGSLTPHEEALAAEARLHAGRSAETPPPAGAAGSQAEGPPGTSPSDAAVAH) are disordered.

It belongs to the RNA methyltransferase TrmD family. In terms of assembly, homodimer.

Its subcellular location is the cytoplasm. The enzyme catalyses guanosine(37) in tRNA + S-adenosyl-L-methionine = N(1)-methylguanosine(37) in tRNA + S-adenosyl-L-homocysteine + H(+). In terms of biological role, specifically methylates guanosine-37 in various tRNAs. The protein is tRNA (guanine-N(1)-)-methyltransferase of Acidothermus cellulolyticus (strain ATCC 43068 / DSM 8971 / 11B).